Consider the following 229-residue polypeptide: Peroxiredoxin-like 2A (229 aa).

Positions 14-112 (MWSIGAGALG…DQLGVPLYAV (99 aa)) are thioredoxin fold. Active-site redox-active residues include cysteine 85 and cysteine 88.

This sequence belongs to the peroxiredoxin-like PRXL2 family. PRXL2A subfamily. In terms of tissue distribution, expressed in CSF1 and TNFSF11-stimulated CD14(+) peripheral blood mononuclear cells (PBMCs).

The protein localises to the cytoplasm. It is found in the secreted. In terms of biological role, involved in redox regulation of the cell. Acts as an antioxidant. Inhibits TNFSF11-induced NFKB1 and JUN activation and osteoclast differentiation. May affect bone resorption and help to maintain bone mass. Acts as a negative regulator of macrophage-mediated inflammation by inhibiting macrophage production of inflammatory cytokines, probably through suppression of the MAPK signaling pathway. The sequence is that of Peroxiredoxin-like 2A from Homo sapiens (Human).